The following is a 138-amino-acid chain: MDSNALIKRCSSSKNKINGLKVPTVTIKVEEVCLVKSNLKIARKNLKKIEKIYDDLNLINPKQLKGINGLINPLLHTIYYEVWFMFMDDIVHIQKNLIDYFEYANKGEEQPIKNNEFVDKIKMLMKPISVDLSTPSKA.

The protein belongs to the IIV-3 015R family.

This is an uncharacterized protein from Simulium iridescent virus (IIV-22).